Reading from the N-terminus, the 111-residue chain is Ribosome-binding factor A (111 aa).

It belongs to the RbfA family. In terms of assembly, monomer. Binds 30S ribosomal subunits, but not 50S ribosomal subunits or 70S ribosomes.

It localises to the cytoplasm. In terms of biological role, one of several proteins that assist in the late maturation steps of the functional core of the 30S ribosomal subunit. Associates with free 30S ribosomal subunits (but not with 30S subunits that are part of 70S ribosomes or polysomes). Required for efficient processing of 16S rRNA. May interact with the 5'-terminal helix region of 16S rRNA. The protein is Ribosome-binding factor A of Helicobacter pylori (strain P12).